Here is a 509-residue protein sequence, read N- to C-terminus: ATP synthase subunit alpha (509 aa).

An ATP-binding site is contributed by 169–176; sequence GDRQTGKT.

This sequence belongs to the ATPase alpha/beta chains family. As to quaternary structure, F-type ATPases have 2 components, CF(1) - the catalytic core - and CF(0) - the membrane proton channel. CF(1) has five subunits: alpha(3), beta(3), gamma(1), delta(1), epsilon(1). CF(0) has three main subunits: a(1), b(2) and c(9-12). The alpha and beta chains form an alternating ring which encloses part of the gamma chain. CF(1) is attached to CF(0) by a central stalk formed by the gamma and epsilon chains, while a peripheral stalk is formed by the delta and b chains.

It localises to the cell inner membrane. It catalyses the reaction ATP + H2O + 4 H(+)(in) = ADP + phosphate + 5 H(+)(out). Functionally, produces ATP from ADP in the presence of a proton gradient across the membrane. The alpha chain is a regulatory subunit. This is ATP synthase subunit alpha from Rhizobium etli (strain CIAT 652).